Reading from the N-terminus, the 246-residue chain is Putative S-adenosyl-L-methionine-dependent methyltransferase Mflv_0168 (246 aa).

S-adenosyl-L-methionine-binding positions include Asp-112 and Asp-141–Leu-142.

This sequence belongs to the UPF0677 family.

Its function is as follows. Exhibits S-adenosyl-L-methionine-dependent methyltransferase activity. The chain is Putative S-adenosyl-L-methionine-dependent methyltransferase Mflv_0168 from Mycolicibacterium gilvum (strain PYR-GCK) (Mycobacterium gilvum (strain PYR-GCK)).